The primary structure comprises 174 residues: Protein VdlD (174 aa).

The 113-residue stretch at 20 to 132 (DRTKLLMSYL…YFTMVAVENG (113 aa)) folds into the HotDog ACOT-type domain.

The protein belongs to the acyl coenzyme A hydrolase family.

The polypeptide is Protein VdlD (vdlD) (Helicobacter pylori (strain J99 / ATCC 700824) (Campylobacter pylori J99)).